A 435-amino-acid polypeptide reads, in one-letter code: 3-phosphoshikimate 1-carboxyvinyltransferase (435 aa).

The 3-phosphoshikimate site is built by Lys-28, Ser-29, and Arg-33. Residue Lys-28 coordinates phosphoenolpyruvate. The phosphoenolpyruvate site is built by Gly-100 and Arg-128. 3-phosphoshikimate is bound by residues Ser-173, Gln-175, Asp-321, and Lys-348. Gln-175 contacts phosphoenolpyruvate. The active-site Proton acceptor is the Asp-321. 2 residues coordinate phosphoenolpyruvate: Arg-352 and Arg-394.

The protein belongs to the EPSP synthase family. As to quaternary structure, monomer.

The protein resides in the cytoplasm. The enzyme catalyses 3-phosphoshikimate + phosphoenolpyruvate = 5-O-(1-carboxyvinyl)-3-phosphoshikimate + phosphate. It participates in metabolic intermediate biosynthesis; chorismate biosynthesis; chorismate from D-erythrose 4-phosphate and phosphoenolpyruvate: step 6/7. Functionally, catalyzes the transfer of the enolpyruvyl moiety of phosphoenolpyruvate (PEP) to the 5-hydroxyl of shikimate-3-phosphate (S3P) to produce enolpyruvyl shikimate-3-phosphate and inorganic phosphate. The chain is 3-phosphoshikimate 1-carboxyvinyltransferase from Desulfitobacterium hafniense (strain DSM 10664 / DCB-2).